The sequence spans 109 residues: Flagellar hook-basal body complex protein FliE (109 aa).

Belongs to the FliE family.

Its subcellular location is the bacterial flagellum basal body. This Pseudomonas fluorescens (strain Pf0-1) protein is Flagellar hook-basal body complex protein FliE.